The following is a 396-amino-acid chain: Tryptophan synthase beta chain (396 aa).

Lysine 86 carries the N6-(pyridoxal phosphate)lysine modification.

It belongs to the TrpB family. As to quaternary structure, tetramer of two alpha and two beta chains. Pyridoxal 5'-phosphate is required as a cofactor.

It catalyses the reaction (1S,2R)-1-C-(indol-3-yl)glycerol 3-phosphate + L-serine = D-glyceraldehyde 3-phosphate + L-tryptophan + H2O. It participates in amino-acid biosynthesis; L-tryptophan biosynthesis; L-tryptophan from chorismate: step 5/5. In terms of biological role, the beta subunit is responsible for the synthesis of L-tryptophan from indole and L-serine. The chain is Tryptophan synthase beta chain from Photobacterium profundum (strain SS9).